Reading from the N-terminus, the 293-residue chain is Diaminopimelate epimerase (293 aa).

The substrate site is built by asparagine 11 and asparagine 78. Residue cysteine 87 is the Proton donor of the active site. Substrate contacts are provided by residues 88 to 89, asparagine 166, asparagine 202, and 220 to 221; these read GN and ER. The active-site Proton acceptor is cysteine 229. Substrate is bound at residue 230-231; that stretch reads GT.

Belongs to the diaminopimelate epimerase family. Homodimer.

Its subcellular location is the cytoplasm. It carries out the reaction (2S,6S)-2,6-diaminopimelate = meso-2,6-diaminopimelate. Its pathway is amino-acid biosynthesis; L-lysine biosynthesis via DAP pathway; DL-2,6-diaminopimelate from LL-2,6-diaminopimelate: step 1/1. Its function is as follows. Catalyzes the stereoinversion of LL-2,6-diaminopimelate (L,L-DAP) to meso-diaminopimelate (meso-DAP), a precursor of L-lysine and an essential component of the bacterial peptidoglycan. The polypeptide is Diaminopimelate epimerase (Mycobacterium sp. (strain JLS)).